An 822-amino-acid chain; its full sequence is MTVLSQIIKPDDMIKITSEFARLGDRCYLDNAGATLYPKSLITSINEDLLKNVYMNPHTDKNTKDYIEQIRCLILKHFNTDPSTYTLIFTSGTTQALKLVIESFQFMKNEDDDLNCGSFVYLEDNHTSVVGLRELAVDKDAEVVHIAHEDFLNVINTKAKQTSKYTNGGNCLVAYPAQSNFNGFKYPLNCIENIKNGCLNNHLKKHLCEINSDWYVLLDAAAYVATSKLDLAKVQPDFVSLSFYKIFGFPTGLGALLVKKSSENVLSQKRYFGGGTVDALLSNEHYHIKREIFHERFEDGSLSFLSIISLKQCLDTMYRIIPRIIHDDIMETISYHTFYLAKDLYCQLLDLRHRNGTKAIKFYLDSDFSDITKQGGVLTFNLVREDGTYIGFSEFQHMADLFNISVRTGCFCNSGSCQRHLHMSNKDMKDMYNAGHRCGDEVDLINEKPTGAIRISFGYYNTFEDVDKFVNMICRCFVNAKARKQKRIINHFVETPKIKHYNGNVNKIINEQIYFKNVDDVLINIPPMSTKIILKEICIFPIKSCGAFKILSGWNIGPKGFEYDREWMIVKDNGVCLTQKQNTRMCMIRPQIDLKQKVMILNFPGKTPISIPLENSINEVQKNGSLCHSKVCTDMIKGIDCGDEVADWISEALEVSFLRLIRQSSNDNRSLKKKKDEDKKLLSLSNQAQYLLINKATVKWLSEKIKDPLFTDDLNHLTDRFRGNLIIEMEQELLEREWHSVIIGNHEFKVEGQCPRCQMVCIDQQTGEKTVEPLRTIAEQFGGKLRFGIYLSYVGTVNKSDDRTLKTYSPIKAILNDDNISR.

Lysine 245 is modified (N6-(pyridoxal phosphate)lysine). The active site involves cysteine 412. Residues 658–814 (LRLIRQSSND…LKTYSPIKAI (157 aa)) form the MOSC domain.

The protein belongs to the class-V pyridoxal-phosphate-dependent aminotransferase family. MOCOS subfamily. It depends on pyridoxal 5'-phosphate as a cofactor.

It catalyses the reaction Mo-molybdopterin + L-cysteine + AH2 = thio-Mo-molybdopterin + L-alanine + A + H2O. The protein operates within cofactor biosynthesis; molybdopterin biosynthesis. In terms of biological role, sulfurates the molybdenum cofactor. Sulfation of molybdenum is essential for xanthine dehydrogenase (XDH) and aldehyde oxidase (ADO) enzymes in which molybdenum cofactor is liganded by 1 oxygen and 1 sulfur atom in active form. The sequence is that of Molybdenum cofactor sulfurase from Bombyx mori (Silk moth).